A 479-amino-acid chain; its full sequence is UPF0164 protein TP_0865 (479 aa).

A signal peptide spans 1–49 (MVRMRRRRACSSGGACGCAAVRGARSFLSVRVLGMRIGMSALCLAPLFA).

The protein belongs to the UPF0164 family.

In Treponema pallidum (strain Nichols), this protein is UPF0164 protein TP_0865.